We begin with the raw amino-acid sequence, 334 residues long: Phosphate acyltransferase (334 aa).

This sequence belongs to the PlsX family. Homodimer. Probably interacts with PlsY.

The protein resides in the cytoplasm. The enzyme catalyses a fatty acyl-[ACP] + phosphate = an acyl phosphate + holo-[ACP]. Its pathway is lipid metabolism; phospholipid metabolism. In terms of biological role, catalyzes the reversible formation of acyl-phosphate (acyl-PO(4)) from acyl-[acyl-carrier-protein] (acyl-ACP). This enzyme utilizes acyl-ACP as fatty acyl donor, but not acyl-CoA. The polypeptide is Phosphate acyltransferase (Mycoplasma capricolum subsp. capricolum (strain California kid / ATCC 27343 / NCTC 10154)).